Consider the following 153-residue polypeptide: MPSAPDSPSLSVNVSGNVQKYSIKKKKVLNAEETELFELTQAAGVVIDQEVFKIIVDLLKMNVAPLAVFQTLKTMCAGQKVSETSTGDASSTSHTTAVPTESRVRSKMSSGQGEKSARESSSQRVPRQVSATRGQKSTKSSGSSSSSSQLTSN.

The interval 80 to 153 (KVSETSTGDA…SSSSSQLTSN (74 aa)) is disordered. 2 stretches are compositionally biased toward polar residues: residues 81–99 (VSETSTGDASSTSHTTAVP) and 107–133 (KMSSGQGEKSARESSSQRVPRQVSATR). Low complexity predominate over residues 134 to 153 (GQKSTKSSGSSSSSSQLTSN).

Belongs to the MOZART2 family. As to quaternary structure, part of the gamma-tubulin complex. Interacts with TUBG1.

It localises to the cytoplasm. Its subcellular location is the cytoskeleton. The protein resides in the microtubule organizing center. It is found in the centrosome. The protein localises to the spindle. The polypeptide is Mitotic-spindle organizing protein 2 (mzt2) (Danio rerio (Zebrafish)).